A 222-amino-acid chain; its full sequence is GTP-binding nuclear protein Ran-4 (222 aa).

Residues Asp-10–Asp-174 form the Small GTPase Ran-type domain. Asp-21 to Thr-28 contacts GTP. The tract at residues His-40–Val-48 is switch-I. Residues Gly-71, Asn-125–Asp-128, and Ser-153–Lys-155 contribute to the GTP site. A switch-II region spans residues Gly-71–Gln-87.

Belongs to the small GTPase superfamily. Ran family. Found in a nuclear export complex with RanGTP, exportin and pre-miRNA.

It is found in the nucleus. Functionally, GTP-binding protein involved in nucleocytoplasmic transport. Required for the import of protein into the nucleus and also for RNA export. Involved in chromatin condensation and control of cell cycle. This is GTP-binding nuclear protein Ran-4 (RAN4) from Arabidopsis thaliana (Mouse-ear cress).